A 364-amino-acid polypeptide reads, in one-letter code: Ribosomal RNA small subunit methyltransferase H (364 aa).

Residues 55–57, Asp-75, Phe-101, Asp-122, and Gln-129 contribute to the S-adenosyl-L-methionine site; that span reads GGH. The disordered stretch occupies residues 333–364; sequence LPPGGGAGFVKAGRVPGEPVRGTRAGSKGRRR.

Belongs to the methyltransferase superfamily. RsmH family.

It localises to the cytoplasm. The catalysed reaction is cytidine(1402) in 16S rRNA + S-adenosyl-L-methionine = N(4)-methylcytidine(1402) in 16S rRNA + S-adenosyl-L-homocysteine + H(+). In terms of biological role, specifically methylates the N4 position of cytidine in position 1402 (C1402) of 16S rRNA. This Bordetella bronchiseptica (strain ATCC BAA-588 / NCTC 13252 / RB50) (Alcaligenes bronchisepticus) protein is Ribosomal RNA small subunit methyltransferase H.